The following is a 299-amino-acid chain: MTIDTELTNGSSESVPFVFIGGGNMAAAIIKGCQNKGFTPKSNIVIGVQTEKSAEKWRQLGYKNVFTNTLEMLERYSTAIYVICVKPQVFEEVVSSWPVNSRPEFIISVMAGVPLKVLNAKLPFVSGNTTIVRLMPNVASSIGAGASTMCYEKNEKIMNQDSHIELAREFAECVGTVELIPERCFNPAMAIGGSSPAWTFMYIESLADGAVAQGLGRAEAKRLAAQAVLGAAQMVLNSNSGFDIETQHFGSLKDMVCSPGGTTIEGVRALEKNGFRYAVMEAVVAASTKADEMAKSLAK.

It belongs to the pyrroline-5-carboxylate reductase family.

It catalyses the reaction L-proline + NADP(+) = (S)-1-pyrroline-5-carboxylate + NADPH + 2 H(+). The catalysed reaction is L-proline + NAD(+) = (S)-1-pyrroline-5-carboxylate + NADH + 2 H(+). The protein operates within amino-acid biosynthesis; L-proline biosynthesis; L-proline from L-glutamate 5-semialdehyde: step 1/1. In Caenorhabditis elegans, this protein is Putative pyrroline-5-carboxylate reductase 4.